Here is a 186-residue protein sequence, read N- to C-terminus: ATP synthase subunit delta (186 aa).

It belongs to the ATPase delta chain family. F-type ATPases have 2 components, F(1) - the catalytic core - and F(0) - the membrane proton channel. F(1) has five subunits: alpha(3), beta(3), gamma(1), delta(1), epsilon(1). F(0) has three main subunits: a(1), b(2) and c(10-14). The alpha and beta chains form an alternating ring which encloses part of the gamma chain. F(1) is attached to F(0) by a central stalk formed by the gamma and epsilon chains, while a peripheral stalk is formed by the delta and b chains.

It is found in the cell inner membrane. F(1)F(0) ATP synthase produces ATP from ADP in the presence of a proton or sodium gradient. F-type ATPases consist of two structural domains, F(1) containing the extramembraneous catalytic core and F(0) containing the membrane proton channel, linked together by a central stalk and a peripheral stalk. During catalysis, ATP synthesis in the catalytic domain of F(1) is coupled via a rotary mechanism of the central stalk subunits to proton translocation. Functionally, this protein is part of the stalk that links CF(0) to CF(1). It either transmits conformational changes from CF(0) to CF(1) or is implicated in proton conduction. The protein is ATP synthase subunit delta of Brucella suis biovar 1 (strain 1330).